We begin with the raw amino-acid sequence, 375 residues long: Probable sugar phosphate/phosphate translocator At3g17430 (375 aa).

Helical transmembrane passes span 9–29, 43–63, 76–96, 106–126, 140–160, 163–183, 193–213, 229–249, 257–276, and 280–302; these read LVLT…VILY, LPIT…FLLI, FEIY…SLWF, VAFI…MAVV, MLLV…FNIV, VYQV…QVLL, ITSL…PWYV, WIFF…FLVI, IRVA…TVIF, and TITG…YNYI. The interval 328–348 is disordered; the sequence is EKKSSDKFNPNDSVEIPRVGG.

The protein belongs to the TPT transporter family. TPT (TC 2.A.7.9) subfamily.

The protein localises to the membrane. This is Probable sugar phosphate/phosphate translocator At3g17430 from Arabidopsis thaliana (Mouse-ear cress).